The sequence spans 836 residues: Lon protease (836 aa).

Residues 41-233 enclose the Lon N-terminal domain; sequence LPVLPLRNTV…RLIHFLNREV (193 aa). 385–392 is an ATP binding site; it reads GPPGVGKT. The 185-residue stretch at 627–811 folds into the Lon proteolytic domain; it reads VMLSGVAVGL…DDLIDYVLEP (185 aa). Catalysis depends on residues S714 and K757. Positions 816 to 836 are disordered; sequence APQFKVEDKDHTPETTGNESE.

Belongs to the peptidase S16 family. In terms of assembly, homohexamer. Organized in a ring with a central cavity.

The protein localises to the cytoplasm. The catalysed reaction is Hydrolysis of proteins in presence of ATP.. Its function is as follows. ATP-dependent serine protease that mediates the selective degradation of mutant and abnormal proteins as well as certain short-lived regulatory proteins. Required for cellular homeostasis and for survival from DNA damage and developmental changes induced by stress. Degrades polypeptides processively to yield small peptide fragments that are 5 to 10 amino acids long. Binds to DNA in a double-stranded, site-specific manner. This Chloroherpeton thalassium (strain ATCC 35110 / GB-78) protein is Lon protease.